The primary structure comprises 271 residues: Expansin-B1 (271 aa).

An N-terminal signal peptide occupies residues 1 to 24; sequence MQLFPVILPTLCVFLHLLISGSGS. An Expansin-like EG45 domain is found at 58-169; that stretch reads GGACGYGSLV…RRTACKYRGK (112 aa). 3 disulfides stabilise this stretch: Cys-61-Cys-90, Cys-93-Cys-164, and Cys-98-Cys-104. The 82-residue stretch at 182-263 folds into the Expansin-like CBD domain; that stretch reads YWLSLLIEYE…NWVPKATYTS (82 aa). An N-linked (GlcNAc...) asparagine glycan is attached at Asn-242.

Belongs to the expansin family. Expansin B subfamily.

Its subcellular location is the secreted. The protein resides in the cell wall. The protein localises to the membrane. In terms of biological role, may cause loosening and extension of plant cell walls by disrupting non-covalent bonding between cellulose microfibrils and matrix glucans. No enzymatic activity has been found. This is Expansin-B1 (EXPB1) from Arabidopsis thaliana (Mouse-ear cress).